Here is a 482-residue protein sequence, read N- to C-terminus: Dual specificity protein phosphatase 10 (482 aa).

The region spanning 168–285 (PSQGPVIIDC…FKQNHENLCD (118 aa)) is the Rhodanese domain. Residues 199–215 (KISRRRLQQGKITVLDL) form an interaction with MAP kinases region. The Tyrosine-protein phosphatase domain occupies 321-464 (ELTPILPFLF…LLEFEEDLNN (144 aa)). The active-site Phosphocysteine intermediate is Cys408.

The protein belongs to the protein-tyrosine phosphatase family. Non-receptor class dual specificity subfamily. As to quaternary structure, monomer. Interacts with MAPK14. Expressed in keratinocytes (at protein level). Detected in brain.

It localises to the cytoplasm. Its subcellular location is the nucleus. It carries out the reaction O-phospho-L-tyrosyl-[protein] + H2O = L-tyrosyl-[protein] + phosphate. It catalyses the reaction O-phospho-L-seryl-[protein] + H2O = L-seryl-[protein] + phosphate. The catalysed reaction is O-phospho-L-threonyl-[protein] + H2O = L-threonyl-[protein] + phosphate. Functionally, protein phosphatase involved in the inactivation of MAP kinases. Has a specificity for the MAPK11/MAPK12/MAPK13/MAPK14 subfamily. It preferably dephosphorylates p38. This Homo sapiens (Human) protein is Dual specificity protein phosphatase 10 (DUSP10).